Here is an 85-residue protein sequence, read N- to C-terminus: Large ribosomal subunit protein bL27 (85 aa).

A disordered region spans residues 1–20; sequence MAHKKAGGSTRNGRDSEAKR.

The protein belongs to the bacterial ribosomal protein bL27 family.

This is Large ribosomal subunit protein bL27 from Cronobacter sakazakii (strain ATCC BAA-894) (Enterobacter sakazakii).